Consider the following 283-residue polypeptide: Type III pantothenate kinase (283 aa).

Residue 9–16 participates in ATP binding; sequence DIGNTRLK. Residues tyrosine 116 and 123–126 each bind substrate; that span reads GVDR. The Proton acceptor role is filled by aspartate 125. Residue threonine 149 participates in ATP binding. A substrate-binding site is contributed by threonine 211.

It belongs to the type III pantothenate kinase family. Homodimer. It depends on NH4(+) as a cofactor. K(+) serves as cofactor.

It localises to the cytoplasm. The enzyme catalyses (R)-pantothenate + ATP = (R)-4'-phosphopantothenate + ADP + H(+). The protein operates within cofactor biosynthesis; coenzyme A biosynthesis; CoA from (R)-pantothenate: step 1/5. Functionally, catalyzes the phosphorylation of pantothenate (Pan), the first step in CoA biosynthesis. This Cupriavidus taiwanensis (strain DSM 17343 / BCRC 17206 / CCUG 44338 / CIP 107171 / LMG 19424 / R1) (Ralstonia taiwanensis (strain LMG 19424)) protein is Type III pantothenate kinase.